An 81-amino-acid chain; its full sequence is Large ribosomal subunit protein bL27 (81 aa).

Over residues 1–11 (MATSKSGGSSK) the composition is skewed to polar residues. Positions 1–24 (MATSKSGGSSKNGRDSISKRLGVK) are disordered.

Belongs to the bacterial ribosomal protein bL27 family.

The sequence is that of Large ribosomal subunit protein bL27 from Borrelia duttonii (strain Ly).